The sequence spans 122 residues: MNPRREPRGGRSSLFDGIEEGGIRAASSYSHEINEHENERALEGLQDRVILLKRLSGDINEEVDTHNRMLDRMGNDMDSSRGFLSGTMDRFKTVFETKSSRRMLTLVASFVGLFLVIYYLTR.

Residues 1 to 103 (MNPRREPRGG…VFETKSSRRM (103 aa)) lie on the Cytoplasmic side of the membrane. The t-SNARE coiled-coil homology domain maps to 32 to 94 (EINEHENERA…SGTMDRFKTV (63 aa)). The residue at position 56 (serine 56) is a Phosphoserine. The chain crosses the membrane as a helical; Anchor for type IV membrane protein span at residues 104–121 (LTLVASFVGLFLVIYYLT). Arginine 122 is a topological domain (vesicular).

This sequence belongs to the BET1 family.

Its subcellular location is the golgi apparatus membrane. The protein localises to the endoplasmic reticulum membrane. Functionally, required for vesicular transport from the ER to the Golgi complex. Functions as a SNARE associated with ER-derived vesicles. This Arabidopsis thaliana (Mouse-ear cress) protein is Bet1-like SNARE 1-1 (BET11).